Reading from the N-terminus, the 244-residue chain is Protein FAM168A (244 aa).

At methionine 1 the chain carries N-acetylmethionine. At arginine 102 the chain carries Asymmetric dimethylarginine. A disordered region spans residues 107-126 (TPYKVPPTQSNTAPPPYSPS).

This sequence belongs to the FAM168 family. Interacts with POLB. Interacts with AKT1 and MT1X. May interact with FAM168B.

In terms of biological role, in cancer context, protects cells from induced-DNA damage and apoptosis. Acts, at least in part, through PI3K/AKT/NFKB signaling pathway and by preventing POLB degradation. Decreases POLB ubiquitation and stabilizes its protein levels. This chain is Protein FAM168A (Fam168a), found in Mus musculus (Mouse).